A 200-amino-acid chain; its full sequence is uncharacterized protein (200 aa).

The disordered stretch occupies residues 1–21 (MSNSAQRDARNSRDESARASD). Over residues 7-21 (RDARNSRDESARASD) the composition is skewed to basic and acidic residues.

This is an uncharacterized protein from Mycobacterium tuberculosis (strain CDC 1551 / Oshkosh).